Consider the following 74-residue polypeptide: Putative defensin-like protein 12 (74 aa).

Positions 1–26 are cleaved as a signal peptide; the sequence is MAKPCAAFLVFLCLSMLILSIPDISC. Disulfide bonds link Cys26–Cys50, Cys33–Cys59, and Cys39–Cys61.

Belongs to the DEFL family.

The protein resides in the secreted. The polypeptide is Putative defensin-like protein 12 (Arabidopsis thaliana (Mouse-ear cress)).